The following is a 360-amino-acid chain: Probable dual-specificity RNA methyltransferase RlmN (360 aa).

Glu-91 acts as the Proton acceptor in catalysis. A Radical SAM core domain is found at 97–335 (QHYGQSVCVT…CVVRQEHGTD (239 aa)). An intrachain disulfide couples Cys-104 to Cys-340. [4Fe-4S] cluster is bound by residues Cys-111, Cys-115, and Cys-118. S-adenosyl-L-methionine contacts are provided by residues 163-164 (GE), Ser-195, 218-220 (SLH), and Asn-296. Catalysis depends on Cys-340, which acts as the S-methylcysteine intermediate.

It belongs to the radical SAM superfamily. RlmN family. [4Fe-4S] cluster is required as a cofactor.

The protein resides in the cytoplasm. It catalyses the reaction adenosine(2503) in 23S rRNA + 2 reduced [2Fe-2S]-[ferredoxin] + 2 S-adenosyl-L-methionine = 2-methyladenosine(2503) in 23S rRNA + 5'-deoxyadenosine + L-methionine + 2 oxidized [2Fe-2S]-[ferredoxin] + S-adenosyl-L-homocysteine. It carries out the reaction adenosine(37) in tRNA + 2 reduced [2Fe-2S]-[ferredoxin] + 2 S-adenosyl-L-methionine = 2-methyladenosine(37) in tRNA + 5'-deoxyadenosine + L-methionine + 2 oxidized [2Fe-2S]-[ferredoxin] + S-adenosyl-L-homocysteine. Specifically methylates position 2 of adenine 2503 in 23S rRNA and position 2 of adenine 37 in tRNAs. The polypeptide is Probable dual-specificity RNA methyltransferase RlmN (Streptococcus equi subsp. equi (strain 4047)).